The primary structure comprises 212 residues: Probable GTP-binding protein EngB (212 aa).

The 175-residue stretch at 23–197 (TGIEVAFAGR…ERILDGWFGL (175 aa)) folds into the EngB-type G domain. Residues 31–38 (GRSNAGKS), 58–62 (GRTQL), 76–79 (DLPG), 143–146 (TKAD), and 176–178 (FSS) each bind GTP. The Mg(2+) site is built by Ser-38 and Thr-60.

The protein belongs to the TRAFAC class TrmE-Era-EngA-EngB-Septin-like GTPase superfamily. EngB GTPase family. Mg(2+) is required as a cofactor.

In terms of biological role, necessary for normal cell division and for the maintenance of normal septation. This chain is Probable GTP-binding protein EngB, found in Alteromonas mediterranea (strain DSM 17117 / CIP 110805 / LMG 28347 / Deep ecotype).